The chain runs to 269 residues: Aquaporin-1 (269 aa).

Over 1-11 the chain is Cytoplasmic; that stretch reads MASEIKKKLFW. Residues 12–29 traverse the membrane as a helical segment; sequence RAVVAEFLAMTLFVFISI. Over 30–46 the chain is Extracellular; it reads GSALGFNYPLERNQTLV. The chain crosses the membrane as a helical span at residues 47 to 65; that stretch reads QDNVKVSLAFGLSIATLAQ. Residues 66-68 are Cytoplasmic-facing; sequence SVG. Residues 69 to 82 lie within the membrane without spanning it; sequence HISGAHLNPAVTLG. Positions 76-78 match the NPA 1 motif; the sequence is NPA. At 83 to 90 the chain is on the cytoplasmic side; it reads LLLSCQIS. The helical transmembrane segment at 91 to 109 threads the bilayer; that stretch reads ILRAVMYIIAQCVGAIVAT. At 110-133 the chain is on the extracellular side; that stretch reads AILSGITSSLVDNSLGRNDLAHGV. Residues 134–153 traverse the membrane as a helical segment; the sequence is NSGQGLGIEIIGTLQLVLCV. Topologically, residues 154–163 are cytoplasmic; the sequence is LATTDRRRRD. Residues 164–181 form a helical membrane-spanning segment; the sequence is LGGSAPLAIGLSVALGHL. The Extracellular portion of the chain corresponds to 182–186; that stretch reads LAIDY. An intramembrane segment occupies 187–199; the sequence is TGCGINPARSFGS. The short motif at 192-194 is the NPA 2 element; sequence NPA. Topologically, residues 200-206 are extracellular; it reads AVLTRNF. Asn205 carries N-linked (GlcNAc...) asparagine glycosylation. The helical transmembrane segment at 207-224 threads the bilayer; the sequence is SNHWIFWVGPFIGGALAV. Residues 225-269 are Cytoplasmic-facing; it reads LIYDFILAPRSSDFTDRMKVWTSGQVEEYDLDADDINSRVEMKPK. Ser247 is subject to Phosphoserine. Tyr253 bears the Phosphotyrosine mark. Position 262 is a phosphoserine (Ser262).

It belongs to the MIP/aquaporin (TC 1.A.8) family. In terms of assembly, homotetramer; each monomer provides an independent water pore. Component of the ankyrin-1 complex in the erythrocyte, composed of ANK1, RHCE, RHAG, SLC4A1, EPB42, GYPA, GYPB and AQP1. Interacts with EPHB2; involved in endolymph production in the inner ear. Identified in a complex with STOM. Interacts (via the N-terminal) with ANK1 (via ANK 1-5 repeats). Interacts (via the C-terminal) with EPB42. In terms of tissue distribution, detected in erythrocytes (at protein level). In the kidney, expressed on luminal and basal borders of proximal tubules and in the thin limb of Henle's loop (at protein level).

The protein resides in the cell membrane. It catalyses the reaction H2O(in) = H2O(out). The enzyme catalyses nitric oxide(out) = nitric oxide(in). It carries out the reaction CO2(out) = CO2(in). The catalysed reaction is glycerol(in) = glycerol(out). It catalyses the reaction H2O2(out) = H2O2(in). The enzyme catalyses K(+)(in) = K(+)(out). It carries out the reaction Na(+)(in) = Na(+)(out). Functionally, forms a water channel that facilitates the transport of water across cell membranes, playing a crucial role in water homeostasis in various tissues. Could also be permeable to small solutes including hydrogen peroxide, glycerol and gases such as amonnia (NH3), nitric oxide (NO) and carbon dioxide (CO2). Recruited to the ankyrin-1 complex, a multiprotein complex of the erythrocyte membrane, it could be part of a CO2 metabolon, linking facilitated diffusion of CO2 across the membrane, anion exchange of Cl(-)/HCO3(-) and interconversion of dissolved CO2 and carbonic acid in the cytosol. In vitro, it shows non-selective gated cation channel activity and may be permeable to cations like K(+) and Na(+) in vivo. This chain is Aquaporin-1, found in Mus musculus (Mouse).